Here is a 91-residue protein sequence, read N- to C-terminus: UPF0250 protein PSPTO_4820 (91 aa).

This sequence belongs to the UPF0250 family.

In Pseudomonas syringae pv. tomato (strain ATCC BAA-871 / DC3000), this protein is UPF0250 protein PSPTO_4820.